We begin with the raw amino-acid sequence, 128 residues long: Small ribosomal subunit protein uS12 (128 aa).

Residue Asp89 is modified to 3-methylthioaspartic acid.

Belongs to the universal ribosomal protein uS12 family. As to quaternary structure, part of the 30S ribosomal subunit. Contacts proteins S8 and S17. May interact with IF1 in the 30S initiation complex.

Functionally, with S4 and S5 plays an important role in translational accuracy. In terms of biological role, interacts with and stabilizes bases of the 16S rRNA that are involved in tRNA selection in the A site and with the mRNA backbone. Located at the interface of the 30S and 50S subunits, it traverses the body of the 30S subunit contacting proteins on the other side and probably holding the rRNA structure together. The combined cluster of proteins S8, S12 and S17 appears to hold together the shoulder and platform of the 30S subunit. The chain is Small ribosomal subunit protein uS12 from Campylobacter jejuni subsp. jejuni serotype O:6 (strain 81116 / NCTC 11828).